The following is a 128-amino-acid chain: Holin-like protein CidA (128 aa).

Helical transmembrane passes span leucine 23–phenylalanine 43, isoleucine 58–isoleucine 78, and isoleucine 84–methionine 104.

It belongs to the CidA/LrgA family. CidA subfamily.

The protein localises to the cell membrane. Functionally, increases the activity of extracellular murein hydrolases possibly by mediating their export via hole formation. Inhibited by the antiholin-like proteins LrgAB. In an unstressed cell, the LrgAB products probably inhibit the function of the CidA protein. When a cell is stressed by the addition of antibiotics or by other factors in the environment, CidA possibly oligomerizes within the bacterial cell membrane, creating lesions that disrupt the proton motive force, which in turn results in loss of cell viability. These lesions are also hypothesized to regulate the subsequent cell lysis by either allowing the murein hydrolases access to the cell wall substrate and/or regulating their activity by a possible change in the cell wall pH that results from loss of membrane potential. This chain is Holin-like protein CidA, found in Bacillus licheniformis (strain ATCC 14580 / DSM 13 / JCM 2505 / CCUG 7422 / NBRC 12200 / NCIMB 9375 / NCTC 10341 / NRRL NRS-1264 / Gibson 46).